An 805-amino-acid polypeptide reads, in one-letter code: G-type lectin S-receptor-like serine/threonine-protein kinase SD1-29 (805 aa).

The signal sequence occupies residues 1 to 21; it reads MGMVLFACLLLLIIFPTCGYA. A Bulb-type lectin domain is found at 22-141; the sequence is AINTSSPLSI…VSGNKLWQSF (120 aa). The Extracellular segment spans residues 22–428; it reads AINTSSPLSI…SELAGSSRRK (407 aa). Residues asparagine 24, asparagine 50, asparagine 85, asparagine 91, and asparagine 248 are each glycosylated (N-linked (GlcNAc...) asparagine). The EGF-like domain occupies 277–313; it reads PENPCDLYGRCGPYGLCVRSDPPKCECLKGFVPKSDE. 2 disulfides stabilise this stretch: cysteine 281-cysteine 293 and cysteine 287-cysteine 301. N-linked (GlcNAc...) asparagine glycosylation is found at asparagine 319 and asparagine 378. The PAN domain maps to 332-418; the sequence is CQAKSSMKTQ…GEFLFIRLAS (87 aa). 2 cysteine pairs are disulfide-bonded: cysteine 371/cysteine 392 and cysteine 375/cysteine 381. A helical transmembrane segment spans residues 429–449; sequence IIVGTTVSLSIFLILVFAAIM. The Cytoplasmic segment spans residues 450–805; that stretch reads LWRYRAKQND…EMTESMIQGR (356 aa). In terms of domain architecture, Protein kinase spans 488 to 773; it reads FSPSNKLGQG…DLPVPKQPIF (286 aa). ATP is bound by residues 494–502 and lysine 516; that span reads LGQGGFGPV. Phosphoserine occurs at positions 522 and 537. A caM-binding region spans residues 577–594; that stretch reads CLKFELDWPKRFNIIQGI. Position 600 is a phosphotyrosine (tyrosine 600). Catalysis depends on aspartate 613, which acts as the Proton acceptor. Serine 617 and serine 630 each carry phosphoserine. Threonine 647 is modified (phosphothreonine). Serine 690 and serine 793 each carry phosphoserine.

This sequence belongs to the protein kinase superfamily. Ser/Thr protein kinase family. In terms of assembly, interacts with PUB9, PUB13, PUB14, PUB29, PUB38, PUB44 and PUB45. Interacts with PBL34, PBL35 and PBL36. In terms of processing, autophosphorylated at Tyr-600. Autophosphorylation at Tyr-600 is required for downstream phosphorylation of the receptor-like cytoplasmic kinase PBL34, PBL35 and PBL36, and activation of plant immunity.

It localises to the cell membrane. It carries out the reaction L-seryl-[protein] + ATP = O-phospho-L-seryl-[protein] + ADP + H(+). It catalyses the reaction L-threonyl-[protein] + ATP = O-phospho-L-threonyl-[protein] + ADP + H(+). The enzyme catalyses L-tyrosyl-[protein] + ATP = O-phospho-L-tyrosyl-[protein] + ADP + H(+). In terms of biological role, S-domain receptor protein kinase involved in lipopolysaccharide (LPS) sensing. Specifically detects LPS of Pseudomonas and Xanthomonas species. LPS are major components of the outer membrane of Gram-negative bacteria and are important microbe-associated molecular patterns (MAMPs) that trigger biphasic production of reactive oxygen species (ROS) and immune responses in plants. Seems to be only partially associated with the second LPS-triggered ROS burst. Mediates defense signaling in response to the medium-chain 3-hydroxy fatty acid 3-OH-C10:0, a pathogen-associated molecular pattern (PAMP) which induces autophosphorylation at Tyr-600. Autophosphorylation at Tyr-600 is required for downstream phosphorylation of the receptor-like cytoplasmic kinase PBL34, PBL35 and PBL36, and activation of plant immunity. Its function is as follows. (Microbial infection) Targeted by the bacterial type III effector protein tyrosine phosphatase HopAO1 from Pseudomonas syringae. HopAO1 dephosphorylates Tyr-600, which suppresses the immune response. The polypeptide is G-type lectin S-receptor-like serine/threonine-protein kinase SD1-29 (Arabidopsis thaliana (Mouse-ear cress)).